A 92-amino-acid chain; its full sequence is Cell division protein FtsB (92 aa).

At 1 to 3 the chain is on the cytoplasmic side; that stretch reads MRL. Residues 4 to 21 form a helical membrane-spanning segment; that stretch reads LILILLSVLVLFQYNFWF. Topologically, residues 22–92 are periplasmic; sequence GSNGFLDYRQ…VFYHIVKESK (71 aa). The stretch at 28 to 63 forms a coiled coil; that stretch reads DYRQNAEKIKENQAENEKLSQRNQRINAEIQGLTKG.

It belongs to the FtsB family. As to quaternary structure, part of a complex composed of FtsB, FtsL and FtsQ.

It is found in the cell inner membrane. Functionally, essential cell division protein. May link together the upstream cell division proteins, which are predominantly cytoplasmic, with the downstream cell division proteins, which are predominantly periplasmic. This is Cell division protein FtsB from Haemophilus influenzae (strain 86-028NP).